We begin with the raw amino-acid sequence, 321 residues long: Protein stand still (321 aa).

2 coiled-coil regions span residues 74–103 (KLHEMKVAALEERRDRIMKNRRFAKSRKKA) and 147–167 (KQEQEGATRKLEDSTSDKANL). Positions 146–162 (HKQEQEGATRKLEDSTS) are enriched in basic and acidic residues. 2 disordered regions span residues 146-166 (HKQEQEGATRKLEDSTSDKAN) and 227-248 (QVPPVQGESKSSGSLASSMEDV). Residues 235–244 (SKSSGSLASS) show a composition bias toward low complexity. Positions 272–292 (QRDVLQRLERSMAQISQELHC) form a coiled coil.

As to expression, germ cells specific. Expressed in all germ cells. During the first instar larvae, it is expressed in all germ cells of both sexes. In third instar larvae, it decreases in male germ cells while it remains in female germ cells. In adult ovary, it is expressed in cells of the germarium, including the stem cells. In the early previtellogenic stages, it is highly expressed in the nurse cells. During vitellogenesis, it is not translocated into the maturing egg. In testes, it is only expressed during some steps of male germline differentiation. At the apex testis, it is expressed at low level in stem cells and dividing spermatogonia, while in newly formed 16-cell cysts of primary spermatocytes, it is transiently but strongly expressed before vanishing during spermatocyte growth phase.

It localises to the nucleus. Functionally, essential in the female germline for proper survival, sex determination and differentiation. Participates in the transcriptional activation of Otu. Does not regulate the expression of Ovo. This chain is Protein stand still (stil), found in Drosophila melanogaster (Fruit fly).